The chain runs to 916 residues: DNA repair endonuclease XPF (916 aa).

The interval 1-457 is helicase-like; sequence MESGQPARRI…EVWMKFRKED (457 aa). Leucine-zipper stretches follow at residues 233–254 and 270–298; these read LNAC…DLSL and LDPL…LQYL. Lys289 is subject to N6-acetyllysine. The segment at 460–487 is disordered; sequence KRIRKSHKRPKDPQNKERASTKERTLKK. The span at 470–483 shows a compositional bias: basic and acidic residues; the sequence is KDPQNKERASTKER. The Nuclear localization signal signature appears at 486–491; it reads KKKKRK. Lys500 participates in a covalent cross-link: Glycyl lysine isopeptide (Lys-Gly) (interchain with G-Cter in SUMO2). Disordered stretches follow at residues 502-526 and 660-679; these read EELE…ESCP and TASA…EQNG. Ser521 is modified (phosphoserine). The nuclease stretch occupies residues 658–813; the sequence is RGTASADVST…PSPHATAELF (156 aa). Residues 683–763 enclose the ERCC4 domain; the sequence is SIVVDMREFR…RPVLLIEFDP (81 aa). Ser764 is subject to Phosphoserine. The interval 837–905 is hhH2, dimerization with ERCC1; that stretch reads TLPESEKYNP…QLYDFIHTSF (69 aa). Lys911 is modified (N6-acetyllysine).

It belongs to the XPF family. In terms of assembly, heterodimer composed of ERCC1 and ERCC4/XPF. Interacts with SLX4/BTBD12; this interaction is direct and links the ERCC1-ERCC4/XPF complex to SLX4, which may coordinate the action of the structure-specific endonuclease during DNA repair. Mg(2+) serves as cofactor. Acetylation at Lys-911 by KAT5 promotes interaction with ERCC1 by disrupting a salt bridge between Glu-907 and Lys-911, thereby exposing a second binding site for ERCC1. Deacetylated by SIRT1.

It is found in the nucleus. The protein localises to the chromosome. Catalytic component of a structure-specific DNA repair endonuclease responsible for the 5-prime incision during DNA repair, and which is essential for nucleotide excision repair (NER) and interstrand cross-link (ICL) repair. This chain is DNA repair endonuclease XPF, found in Homo sapiens (Human).